The chain runs to 622 residues: Cilia- and flagella-associated protein 206 (622 aa).

It belongs to the CFAP206 family.

It localises to the cytoplasm. It is found in the cytoskeleton. The protein resides in the cilium axoneme. Its subcellular location is the cilium basal body. In terms of biological role, essential for sperm motility and is involved in the regulation of the beating frequency of motile cilia on the epithelial cells of the respiratory tract. Required for the establishment of radial spokes in sperm flagella. This is Cilia- and flagella-associated protein 206 from Rattus norvegicus (Rat).